An 819-amino-acid polypeptide reads, in one-letter code: Zinc finger protein 658B (819 aa).

The C2H2-type 1; degenerate zinc-finger motif lies at 141–166 (YLSDEHGKCRKSFYWKAHLIQHERPH). C2H2-type zinc fingers lie at residues 200–222 (YECNECGKAFCQNSNLSKHLRIH), 278–300 (YECIECGKTFSKTSHLRAHQRIH), 306–328 (YECVECEKTFSHKTHLSVHQRVH), 334–356 (YECNDCGKSFTYNSALRAHQRIH), 362–384 (YECSDCEKTFAHNSALRAHHRIH), 390–412 (YECNECGRSFAHISVLKAHQRIH), 418–440 (YECNECGRSFTYNSALRAHQRIH), 446–468 (YECSDCEKTFAHNSALKIHQRIH), 474–496 (YKCNECEKTFAHNSALRAHQNIH), 502–524 (YECSECGKTFFQKTRLSTHRRIH), 530–552 (YECSKCGKTFSQKSYLSGHERIH), 558–580 (YECNVCGKTFVYKAALIVHQRIH), 586–608 (YECNECGKTFSQRTHLCAHQRIH), and 614–636 (YECNECGKTFADNSALRAHHRIH). A C2H2-type 16; degenerate zinc finger spans residues 642–664 (YECNDCGKTFSKTSHLRAHLRTR). 5 consecutive C2H2-type zinc fingers follow at residues 670 to 692 (YECSECGKTFSEKSYVSAHQRVH), 698 to 720 (YECNVCGKPFAHNSTLRVHQRIH), 726 to 748 (YECNDCGKTFSQKSHLSAHQRIH), 754 to 776 (YECNECGKAFAQNSTLRVHQRIH), and 782 to 805 (YECDECGKTFVRKAALRVHHTRMH).

It belongs to the krueppel C2H2-type zinc-finger protein family.

The protein localises to the nucleus. In terms of biological role, may be involved in transcriptional regulation. The chain is Zinc finger protein 658B (ZNF658B) from Homo sapiens (Human).